A 323-amino-acid polypeptide reads, in one-letter code: Olfactory receptor 1E2 (323 aa).

At 1 to 25 (MMGQNQTSISDFLLLGLPIQPEQQN) the chain is on the extracellular side. N-linked (GlcNAc...) asparagine glycosylation is present at N5. The chain crosses the membrane as a helical span at residues 26 to 49 (LCYALFLAMYLTTLLGNLLIIVLI). The Cytoplasmic segment spans residues 50-57 (RLDSHLHT). A helical transmembrane segment spans residues 58–79 (PVYLFLSNLSFSDLCFSSVTMP). Residues 80 to 100 (KLLQNMQNQDPSIPYADCLTQ) lie on the Extracellular side of the membrane. Residues C97 and C198 are joined by a disulfide bond. Residues 101–120 (MYFFLYFSDLESFLLVAMAY) form a helical membrane-spanning segment. The Cytoplasmic portion of the chain corresponds to 121–148 (DRYVAICFPMHYTAICFLLHYTAIMSPM). The chain crosses the membrane as a helical span at residues 149 to 167 (LCLSVVALSWVLTTFHAML). At 168–205 (HTLLMARLCFCADNVIPHFFCDMSALLKLACSDTRVNE) the chain is on the extracellular side. The chain crosses the membrane as a helical span at residues 206 to 228 (WVIFIMGGLILVIPFLLILGSYA). Residues 229-245 (RIVSSILKVPSSKGICK) lie on the Cytoplasmic side of the membrane. The chain crosses the membrane as a helical span at residues 246-269 (AFSTCGSHLSVVSLFYGTVIGLYL). At 270–281 (CPSANSSTLKDT) the chain is on the extracellular side. The N-linked (GlcNAc...) asparagine glycan is linked to N274. A helical transmembrane segment spans residues 282 to 301 (VMAMMYTVVTPMLTPFIYSL). At 302-323 (RNRDMKGALERVICKRKNPFLL) the chain is on the cytoplasmic side.

This sequence belongs to the G-protein coupled receptor 1 family.

It localises to the cell membrane. Functionally, odorant receptor. This Homo sapiens (Human) protein is Olfactory receptor 1E2 (OR1E2).